A 470-amino-acid chain; its full sequence is 3-isopropylmalate dehydratase large subunit (470 aa).

The [4Fe-4S] cluster site is built by C348, C409, and C412.

It belongs to the aconitase/IPM isomerase family. LeuC type 1 subfamily. In terms of assembly, heterodimer of LeuC and LeuD. [4Fe-4S] cluster serves as cofactor.

It catalyses the reaction (2R,3S)-3-isopropylmalate = (2S)-2-isopropylmalate. It functions in the pathway amino-acid biosynthesis; L-leucine biosynthesis; L-leucine from 3-methyl-2-oxobutanoate: step 2/4. In terms of biological role, catalyzes the isomerization between 2-isopropylmalate and 3-isopropylmalate, via the formation of 2-isopropylmaleate. The sequence is that of 3-isopropylmalate dehydratase large subunit from Acidithiobacillus ferrooxidans (strain ATCC 23270 / DSM 14882 / CIP 104768 / NCIMB 8455) (Ferrobacillus ferrooxidans (strain ATCC 23270)).